Consider the following 34-residue polypeptide: Ribonuclease PL1 (34 aa).

Residue N4 is glycosylated (N-linked (GlcNAc...) asparagine; partial). The active-site Proton acceptor is H15.

Belongs to the pancreatic ribonuclease family.

Its subcellular location is the lysosome. It carries out the reaction an [RNA] containing cytidine + H2O = an [RNA]-3'-cytidine-3'-phosphate + a 5'-hydroxy-ribonucleotide-3'-[RNA].. It catalyses the reaction an [RNA] containing uridine + H2O = an [RNA]-3'-uridine-3'-phosphate + a 5'-hydroxy-ribonucleotide-3'-[RNA].. The polypeptide is Ribonuclease PL1 (Sus scrofa (Pig)).